Reading from the N-terminus, the 296-residue chain is Mycothiol acetyltransferase (296 aa).

N-acetyltransferase domains follow at residues 17–146 (YNHR…AVYD) and 156–296 (LKTA…VYEK). A 1D-myo-inositol 2-(L-cysteinylamino)-2-deoxy-alpha-D-glucopyranoside-binding site is contributed by Glu-44. Acetyl-CoA is bound at residue 81-83 (LAV). Residues Glu-183, Lys-222, and Glu-230 each coordinate 1D-myo-inositol 2-(L-cysteinylamino)-2-deoxy-alpha-D-glucopyranoside. Residues 234–236 (VGL) and 241–247 (RGKGLGD) each bind acetyl-CoA. Tyr-268 is a binding site for 1D-myo-inositol 2-(L-cysteinylamino)-2-deoxy-alpha-D-glucopyranoside.

It belongs to the acetyltransferase family. MshD subfamily. As to quaternary structure, monomer.

The enzyme catalyses 1D-myo-inositol 2-(L-cysteinylamino)-2-deoxy-alpha-D-glucopyranoside + acetyl-CoA = mycothiol + CoA + H(+). Functionally, catalyzes the transfer of acetyl from acetyl-CoA to desacetylmycothiol (Cys-GlcN-Ins) to form mycothiol. The protein is Mycothiol acetyltransferase of Corynebacterium efficiens (strain DSM 44549 / YS-314 / AJ 12310 / JCM 11189 / NBRC 100395).